We begin with the raw amino-acid sequence, 235 residues long: uncharacterized protein (235 aa).

Transmembrane regions (helical) follow at residues 2–22 (VIGP…GALL), 34–54 (MTSI…VKCA), 56–76 (LPAM…CLLE), 102–122 (FIQN…GIFG), 147–167 (MIFA…LLII), 178–198 (ILPL…GLLL), and 210–230 (MFPV…SAAW).

The protein localises to the cell membrane. This is an uncharacterized protein from Escherichia coli (strain K12).